Reading from the N-terminus, the 499-residue chain is Potassium channel subfamily K member 5 (499 aa).

Residues 1-7 (MVDRGPL) lie on the Cytoplasmic side of the membrane. The helical transmembrane segment at 8–26 (LTSAIIFYLAIGAAIFEVL) threads the bilayer. The N-linked (GlcNAc...) asparagine glycan is linked to Asn-77. The segment at residues 85–112 (WPNAMIFAATVITTIGYGNVAPKTPAGR) is an intramembrane region (pore-forming). K(+) is bound by residues Thr-98, Ile-99, Gly-100, and Tyr-101. The selectivity filter 1 stretch occupies residues 98–103 (TIGYGN). Residues 113–133 (LFCVFYGLFGVPLCLTWISAL) traverse the membrane as a helical segment. Residues 134–157 (GKFFGGRAKRLGQFLTKRGVSLRK) lie on the Cytoplasmic side of the membrane. Residues 158-180 (AQITCTVIFIVWGVLVHLVIPPF) form a helical membrane-spanning segment. An intramembrane region (pore-forming) is located at residues 190–215 (YIEGLYYSFITISTIGFGDFVAGVNP). 4 residues coordinate K(+): Thr-203, Ile-204, Gly-205, and Phe-206. Residues 203–208 (TIGFGD) form a selectivity filter 2 region. A helical membrane pass occupies residues 230 to 250 (WIYLGLAWLSLFVNWKVSMFV). The Cytoplasmic portion of the chain corresponds to 251–325 (EVHKAIKKRR…SGGGETGPGP (75 aa)). Disordered regions lie at residues 312-335 (AMKTSGGGETGPGPGLGPQGGGLP), 360-388 (QTLRSKGHVSRSPDEEAVARAPEDSSPAP), and 428-499 (GLSD…PKGT). Positions 316–334 (SGGGETGPGPGLGPQGGGL) are enriched in gly residues. Positions 370-382 (RSPDEEAVARAPE) are enriched in basic and acidic residues. Ser-371 carries the phosphoserine modification. The span at 466 to 480 (SSSESTFTSTESELS) shows a compositional bias: low complexity.

This sequence belongs to the two pore domain potassium channel (TC 1.A.1.8) family. Homodimer; disulfide-linked. Heterodimer with KCNK16 and KCNK17. Abundant expression in kidney, also detected in liver, placenta and small intestine. In the kidney, expression is restricted to the distal tubules and collecting ducts. Not expressed in proximal tubules or glomeruli. Expressed in pancreas, in both endocrine (alpha, beta, gamma, delta, and epsilon) and exocrine (acinar and ductal) cells.

Its subcellular location is the membrane. The enzyme catalyses K(+)(in) = K(+)(out). The channel conductance is stimulated by extracellular alkaline pH. Inhibited by quinine, quinidine and external acidification. Its function is as follows. K(+) channel that conducts voltage-dependent outward rectifying currents upon membrane depolarization. Voltage sensing is coupled to K(+) electrochemical gradient in an 'ion flux gating' mode where outward but not inward ion flow opens the gate. Homo- and heterodimerizes to form functional channels with distinct regulatory and gating properties. The sequence is that of Potassium channel subfamily K member 5 from Homo sapiens (Human).